The following is a 492-amino-acid chain: Glutamyl-tRNA(Gln) amidotransferase subunit A (492 aa).

Active-site charge relay system residues include lysine 78 and serine 158. Serine 182 functions as the Acyl-ester intermediate in the catalytic mechanism.

It belongs to the amidase family. GatA subfamily. In terms of assembly, heterotrimer of A, B and C subunits.

It catalyses the reaction L-glutamyl-tRNA(Gln) + L-glutamine + ATP + H2O = L-glutaminyl-tRNA(Gln) + L-glutamate + ADP + phosphate + H(+). Allows the formation of correctly charged Gln-tRNA(Gln) through the transamidation of misacylated Glu-tRNA(Gln) in organisms which lack glutaminyl-tRNA synthetase. The reaction takes place in the presence of glutamine and ATP through an activated gamma-phospho-Glu-tRNA(Gln). The polypeptide is Glutamyl-tRNA(Gln) amidotransferase subunit A (Parvibaculum lavamentivorans (strain DS-1 / DSM 13023 / NCIMB 13966)).